The sequence spans 172 residues: Large ribosomal subunit protein uL10 (172 aa).

The protein belongs to the universal ribosomal protein uL10 family. As to quaternary structure, part of the ribosomal stalk of the 50S ribosomal subunit. The N-terminus interacts with L11 and the large rRNA to form the base of the stalk. The C-terminus forms an elongated spine to which L12 dimers bind in a sequential fashion forming a multimeric L10(L12)X complex.

In terms of biological role, forms part of the ribosomal stalk, playing a central role in the interaction of the ribosome with GTP-bound translation factors. The polypeptide is Large ribosomal subunit protein uL10 (Syntrophotalea carbinolica (strain DSM 2380 / NBRC 103641 / GraBd1) (Pelobacter carbinolicus)).